Reading from the N-terminus, the 332-residue chain is Glycerol-3-phosphate dehydrogenase [NAD(P)+] (332 aa).

Trp15, Arg35, and Lys108 together coordinate NADPH. 3 residues coordinate sn-glycerol 3-phosphate: Lys108, Gly137, and Ser139. Ala141 is an NADPH binding site. Sn-glycerol 3-phosphate is bound by residues Lys192, Asp245, Ser255, Arg256, and Asn257. The Proton acceptor role is filled by Lys192. Residue Arg256 participates in NADPH binding. NADPH-binding residues include Leu278 and Glu280.

Belongs to the NAD-dependent glycerol-3-phosphate dehydrogenase family.

It localises to the cytoplasm. The enzyme catalyses sn-glycerol 3-phosphate + NAD(+) = dihydroxyacetone phosphate + NADH + H(+). It catalyses the reaction sn-glycerol 3-phosphate + NADP(+) = dihydroxyacetone phosphate + NADPH + H(+). Its pathway is membrane lipid metabolism; glycerophospholipid metabolism. In terms of biological role, catalyzes the reduction of the glycolytic intermediate dihydroxyacetone phosphate (DHAP) to sn-glycerol 3-phosphate (G3P), the key precursor for phospholipid synthesis. This is Glycerol-3-phosphate dehydrogenase [NAD(P)+] from Methylobacterium radiotolerans (strain ATCC 27329 / DSM 1819 / JCM 2831 / NBRC 15690 / NCIMB 10815 / 0-1).